A 221-amino-acid polypeptide reads, in one-letter code: Immediate early response gene 2 protein (221 aa).

Met-1 carries the post-translational modification N-acetylmethionine. A disordered region spans residues 105–155 (ETPALCDPPPARVSRKRRSSSDLSDGSDAGLVPSKKARLEEVEGEATSEVP). Residues 125-136 (SDLSDGSDAGLV) show a composition bias toward low complexity.

Belongs to the IER family.

It localises to the cytoplasm. It is found in the nucleus. In terms of biological role, DNA-binding protein that seems to act as a transcription factor. Involved in the regulation of neuronal differentiation, acts upon JNK-signaling pathway activation and plays a role in neurite outgrowth in hippocampal cells. May mediate with FIBP FGF-signaling in the establishment of laterality in the embryo. Promotes cell motility, seems to stimulate tumor metastasis. The chain is Immediate early response gene 2 protein (Ier2) from Mus musculus (Mouse).